Reading from the N-terminus, the 396-residue chain is Metallophosphoesterase 1 (396 aa).

The chain crosses the membrane as a helical span at residues 28–48 (TVVIISVLLFCEYFIYYLVLF). A divalent metal cation is bound by residues aspartate 75, aspartate 117, asparagine 155, histidine 249, histidine 303, and histidine 305. A helical transmembrane segment spans residues 356-376 (TVLTMYGAAAGFLMILILVHF).

The protein belongs to the metallophosphoesterase superfamily. MPPE1 family. Interacts with GPI-anchor proteins (via the GPI portion). Interacts with TMED10. The cofactor is Mn(2+).

It localises to the endoplasmic reticulum-Golgi intermediate compartment membrane. Metallophosphoesterase that catalyzes the removal of a side-chain ethanolamine-phosphate (EtNP) from the second mannose of the GPI-anchor protein intermediate. Participates in the glycan remodeling steps of GPI-anchor maturation to allow an efficient transport of GPI-anchor proteins from the endoplasmic reticulum to the Golgi. In Mus musculus (Mouse), this protein is Metallophosphoesterase 1.